We begin with the raw amino-acid sequence, 562 residues long: Tripeptidyl-peptidase 1 (562 aa).

Residues 1 to 19 (MGLQARLLGLLALVIAGKC) form the signal peptide. Residues 20-194 (TYNPEPDQRW…PEPQQVGTVS (175 aa)) constitute a propeptide, removed in mature form. Residues Cys111 and Cys122 are joined by a disulfide bond. The region spanning 198–562 (GVTPSVLRQR…PALLKTLLNP (365 aa)) is the Peptidase S53 domain. The N-linked (GlcNAc...) asparagine glycan is linked to Asn209. The N-linked (GlcNAc...) (high mannose) asparagine glycan is linked to Asn221. Catalysis depends on charge relay system residues Glu271 and Asp275. Residues Asn285, Asn312, and Asn442 are each glycosylated (N-linked (GlcNAc...) asparagine). Intrachain disulfides connect Cys364-Cys525 and Cys521-Cys536. Catalysis depends on Ser474, which acts as the Charge relay system. The Ca(2+) site is built by Asp516 and Val517. Gly538, Gly540, and Asp542 together coordinate Ca(2+).

In terms of assembly, monomer. Interacts with CLN5. Interacts with CLN3. Ca(2+) serves as cofactor. Post-translationally, activated by autocatalytic proteolytical processing upon acidification. N-glycosylation is required for processing and activity.

It is found in the lysosome. The protein resides in the melanosome. It catalyses the reaction Release of an N-terminal tripeptide from a polypeptide, but also has endopeptidase activity.. Functionally, lysosomal serine protease with tripeptidyl-peptidase I activity. May act as a non-specific lysosomal peptidase which generates tripeptides from the breakdown products produced by lysosomal proteinases. Requires substrates with an unsubstituted N-terminus. In Mus musculus (Mouse), this protein is Tripeptidyl-peptidase 1 (Tpp1).